A 137-amino-acid polypeptide reads, in one-letter code: MKQRTLSIIKPDALKKKVVGKIIDRFESNGLEVVAMKRLHLSVKDAENFYAIHRERPFFKDLIEFMVSGPVVVMVLEGEDAVAKNRDLMGATDPKLAQKGTIRADFAESIDANAVHGSDSLENAHNEIAFFFATRDL.

Residues K10, F58, R86, T92, R103, and N113 each coordinate ATP. Catalysis depends on H116, which acts as the Pros-phosphohistidine intermediate.

Belongs to the NDK family. Homotetramer. It depends on Mg(2+) as a cofactor.

Its subcellular location is the cytoplasm. The catalysed reaction is a 2'-deoxyribonucleoside 5'-diphosphate + ATP = a 2'-deoxyribonucleoside 5'-triphosphate + ADP. It catalyses the reaction a ribonucleoside 5'-diphosphate + ATP = a ribonucleoside 5'-triphosphate + ADP. Functionally, major role in the synthesis of nucleoside triphosphates other than ATP. The ATP gamma phosphate is transferred to the NDP beta phosphate via a ping-pong mechanism, using a phosphorylated active-site intermediate. This is Nucleoside diphosphate kinase from Helicobacter pylori (strain P12).